We begin with the raw amino-acid sequence, 460 residues long: Argininosuccinate lyase (460 aa).

It belongs to the lyase 1 family. Argininosuccinate lyase subfamily.

It localises to the cytoplasm. The enzyme catalyses 2-(N(omega)-L-arginino)succinate = fumarate + L-arginine. The protein operates within amino-acid biosynthesis; L-arginine biosynthesis; L-arginine from L-ornithine and carbamoyl phosphate: step 3/3. This chain is Argininosuccinate lyase, found in Desulforamulus reducens (strain ATCC BAA-1160 / DSM 100696 / MI-1) (Desulfotomaculum reducens).